We begin with the raw amino-acid sequence, 369 residues long: MKSGRFIGVMSGTSLDGVDVVLATIDEHRVAQLASLSWPIPVSLKQAVLDICQGQQLTLSQFGQLDTQLGRLFADAVNALLKEQNLQARDIVAIGCHGQTVWHEPTGVAPHTLQIGDNNQIVARTGITVVGDFRRRDIALGGQGAPLVPAFHHALLAHPTERRMVLNIGGIANLSLLIPGQPVGGYDTGPGNMLMDAWIWRQAGKPYDKDAEWARAGKVILPLLQNMLSDPYFSQPAPKSTGREYFNYGWLERHLRHFPGVDPRDVQATLAELTAVTISEQVLLSGGCERLMVCGGGSRNPLLMARLAVLLLGTEVTTTDAVGISGDDMEALAFAWLAWRTLAGLPGNLPSVTGASQETVLGAIFPANS.

12–19 is an ATP binding site; the sequence is GTSLDGVD.

It belongs to the anhydro-N-acetylmuramic acid kinase family.

The enzyme catalyses 1,6-anhydro-N-acetyl-beta-muramate + ATP + H2O = N-acetyl-D-muramate 6-phosphate + ADP + H(+). Its pathway is amino-sugar metabolism; 1,6-anhydro-N-acetylmuramate degradation. The protein operates within cell wall biogenesis; peptidoglycan recycling. Catalyzes the specific phosphorylation of 1,6-anhydro-N-acetylmuramic acid (anhMurNAc) with the simultaneous cleavage of the 1,6-anhydro ring, generating MurNAc-6-P. Is required for the utilization of anhMurNAc either imported from the medium or derived from its own cell wall murein, and thus plays a role in cell wall recycling. The polypeptide is Anhydro-N-acetylmuramic acid kinase (Shigella flexneri serotype 5b (strain 8401)).